Here is a 494-residue protein sequence, read N- to C-terminus: UDP-N-acetylmuramoyl-L-alanyl-D-glutamate--L-lysine ligase (494 aa).

Residue S30 participates in UDP-N-acetyl-alpha-D-muramoyl-L-alanyl-D-glutamate binding. ATP is bound at residue 110 to 116 (GTNGKTS). UDP-N-acetyl-alpha-D-muramoyl-L-alanyl-D-glutamate is bound by residues 152-153 (TT), S179, and R187. Residue K219 is modified to N6-carboxylysine. Residues 406-409 (DNPA) carry the L-lysine recognition motif motif.

The protein belongs to the MurCDEF family. MurE subfamily. Carboxylation is probably crucial for Mg(2+) binding and, consequently, for the gamma-phosphate positioning of ATP.

The protein localises to the cytoplasm. It catalyses the reaction UDP-N-acetyl-alpha-D-muramoyl-L-alanyl-D-glutamate + L-lysine + ATP = UDP-N-acetyl-alpha-D-muramoyl-L-alanyl-gamma-D-glutamyl-L-lysine + ADP + phosphate + H(+). Its pathway is cell wall biogenesis; peptidoglycan biosynthesis. In terms of biological role, catalyzes the addition of L-lysine to the nucleotide precursor UDP-N-acetylmuramoyl-L-alanyl-D-glutamate (UMAG) in the biosynthesis of bacterial cell-wall peptidoglycan. In Staphylococcus aureus (strain Mu3 / ATCC 700698), this protein is UDP-N-acetylmuramoyl-L-alanyl-D-glutamate--L-lysine ligase.